A 156-amino-acid chain; its full sequence is MNMNATLLGQAIAFFFFVTFCMKYVWPPLMEAIEERQAKIADGLVAADRAAKDLNLAQANASEQLKEAKHAASELIEQANKRRAQIVDEAKAEAQAEREKILAQGLAEIESERNRARDELRKQVATLAVIGAEKILERSIDKDVHAELLNKVTAEL.

A helical membrane pass occupies residues 7 to 29 (LLGQAIAFFFFVTFCMKYVWPPL).

This sequence belongs to the ATPase B chain family. In terms of assembly, F-type ATPases have 2 components, F(1) - the catalytic core - and F(0) - the membrane proton channel. F(1) has five subunits: alpha(3), beta(3), gamma(1), delta(1), epsilon(1). F(0) has three main subunits: a(1), b(2) and c(10-14). The alpha and beta chains form an alternating ring which encloses part of the gamma chain. F(1) is attached to F(0) by a central stalk formed by the gamma and epsilon chains, while a peripheral stalk is formed by the delta and b chains.

It localises to the cell inner membrane. In terms of biological role, f(1)F(0) ATP synthase produces ATP from ADP in the presence of a proton or sodium gradient. F-type ATPases consist of two structural domains, F(1) containing the extramembraneous catalytic core and F(0) containing the membrane proton channel, linked together by a central stalk and a peripheral stalk. During catalysis, ATP synthesis in the catalytic domain of F(1) is coupled via a rotary mechanism of the central stalk subunits to proton translocation. Functionally, component of the F(0) channel, it forms part of the peripheral stalk, linking F(1) to F(0). The polypeptide is ATP synthase subunit b (Photobacterium profundum (strain SS9)).